Here is a 380-residue protein sequence, read N- to C-terminus: MSKRDFYEVLGVSKGADEREIKKAYKPLAMKFHPDRNQGDAASEEKFKEVKEAYEILTDENLRARYDQYGHAGVDQSQGGGGHGGFGGGADFGDAFGDIFGDIFGGRNGGGRRGPARGSDLRYTMELTLEEAVRGVSKEIKVPSLVHCEVCNGSGAHTGSTAQTCPTCHGAGQVQMRQGFFAVQQACPHCHGRGKIIKDPCRKCHGEGRYQKTKTLSVKIPAGVDTGDRIRLSGEGEAGEAGAPAGDLYVQVHVKEHEIFVRDGNNLYCEVPISFTAAALGGEIEVPTLDGRVKLKVTPETQTGKMFRMRGKGVKSVRSGQVGDLMCKVVIETPVKLTESQKELLRQLDESFSGAAAKTHKPRSEGFFEGVKRFFDDLTR.

Positions 5-70 (DFYEVLGVSK…NLRARYDQYG (66 aa)) constitute a J domain. Residues 135–213 (GVSKEIKVPS…CHGEGRYQKT (79 aa)) form a CR-type zinc finger. Zn(2+) is bound by residues C148, C151, C165, C168, C187, C190, C201, and C204. 4 CXXCXGXG motif repeats span residues 148–155 (CEVCNGSG), 165–172 (CPTCHGAG), 187–194 (CPHCHGRG), and 201–208 (CRKCHGEG).

The protein belongs to the DnaJ family. As to quaternary structure, homodimer. Requires Zn(2+) as cofactor.

The protein resides in the cytoplasm. Its function is as follows. Participates actively in the response to hyperosmotic and heat shock by preventing the aggregation of stress-denatured proteins and by disaggregating proteins, also in an autonomous, DnaK-independent fashion. Unfolded proteins bind initially to DnaJ; upon interaction with the DnaJ-bound protein, DnaK hydrolyzes its bound ATP, resulting in the formation of a stable complex. GrpE releases ADP from DnaK; ATP binding to DnaK triggers the release of the substrate protein, thus completing the reaction cycle. Several rounds of ATP-dependent interactions between DnaJ, DnaK and GrpE are required for fully efficient folding. Also involved, together with DnaK and GrpE, in the DNA replication of plasmids through activation of initiation proteins. This is Chaperone protein DnaJ from Aeromonas salmonicida (strain A449).